We begin with the raw amino-acid sequence, 562 residues long: Phosphoglucomutase-1 (562 aa).

Met-1 bears the N-acetylmethionine mark. At Lys-16 the chain carries N6-acetyllysine. Arg-23 contributes to the alpha-D-glucose 1,6-bisphosphate binding site. Phosphothreonine is present on Thr-115. Ser-117 is a binding site for alpha-D-glucose 1,6-bisphosphate. Ser-117 serves as the catalytic Phosphoserine intermediate. Ser-117 serves as a coordination point for Mg(2+). 2 positions are modified to phosphoserine: Ser-117 and Ser-134. At Thr-185 the chain carries Phosphothreonine. Ser-213 is subject to Phosphoserine. Mg(2+) is bound by residues Asp-288, Asp-290, and Asp-292. Alpha-D-glucose 1,6-bisphosphate is bound by residues Asp-292 and Arg-293. Lys-349 is subject to N6-acetyllysine. Tyr-353 is subject to Phosphotyrosine. Position 357 (Thr-357) interacts with alpha-D-glucose 1,6-bisphosphate. Ser-369 is subject to Phosphoserine. Positions 376, 378, and 389 each coordinate alpha-D-glucose 1,6-bisphosphate. The residue at position 378 (Ser-378) is a Phosphoserine. Lys-419 is modified (N6-succinyllysine). At Thr-467 the chain carries Phosphothreonine; by PAK1. Residues Ser-477, Ser-485, and Ser-505 each carry the phosphoserine modification. Thr-507 bears the Phosphothreonine mark. Residues Ser-509 and Ser-541 each carry the phosphoserine modification.

The protein belongs to the phosphohexose mutase family. In terms of assembly, monomer. Mg(2+) is required as a cofactor. Post-translationally, phosphorylation at Thr-467 by PAK1 significantly enhances enzymatic activity.

It localises to the cytoplasm. The enzyme catalyses alpha-D-glucose 1-phosphate = alpha-D-glucose 6-phosphate. The catalysed reaction is O-phospho-L-seryl-[protein] + alpha-D-glucose 1-phosphate = alpha-D-glucose 1,6-bisphosphate + L-seryl-[protein]. It catalyses the reaction alpha-D-glucose 1,6-bisphosphate + L-seryl-[protein] = O-phospho-L-seryl-[protein] + alpha-D-glucose 6-phosphate. Catalyzes the reversible isomerization of alpha-D-glucose 1-phosphate to alpha-D-glucose 6-phosphate. The mechanism proceeds via the intermediate compound alpha-D-glucose 1,6-bisphosphate. This enzyme participates in both the breakdown and synthesis of glucose. This Bos taurus (Bovine) protein is Phosphoglucomutase-1 (PGM1).